Here is a 175-residue protein sequence, read N- to C-terminus: Nucleoside-triphosphatase THEP1 (175 aa).

ATP-binding positions include 16–23 (GMPGVGKT) and 103–110 (VAFIDEIG).

The protein belongs to the THEP1 NTPase family.

It catalyses the reaction a ribonucleoside 5'-triphosphate + H2O = a ribonucleoside 5'-diphosphate + phosphate + H(+). Its function is as follows. Has nucleotide phosphatase activity towards ATP, GTP, CTP, TTP and UTP. May hydrolyze nucleoside diphosphates with lower efficiency. In Pyrobaculum calidifontis (strain DSM 21063 / JCM 11548 / VA1), this protein is Nucleoside-triphosphatase THEP1.